The following is a 358-amino-acid chain: Ion-translocating oxidoreductase complex subunit D (358 aa).

7 helical membrane-spanning segments follow: residues 16 to 36, 38 to 58, 68 to 90, 128 to 148, 206 to 226, 236 to 256, and 286 to 306; these read VSRTMLTVVAALTPATLFGLW, FGWPAIFLFLTTVVSAWVFEV, IRPFATDGSAILSGWLVAMTLPP, AMLVVALPVQMTTWIAPVGLL, FVPGSLGETSTVLLALGGLLL, IPLAVLGTLVTLSAICSFLAP, and PVTTAGKWVYGIGIGTLVFVI.

It belongs to the NqrB/RnfD family. The complex is composed of six subunits: RnfA, RnfB, RnfC, RnfD, RnfE and RnfG. FMN serves as cofactor.

The protein localises to the cellular chromatophore membrane. Part of a membrane-bound complex that couples electron transfer with translocation of ions across the membrane. Required for nitrogen fixation. Involved in electron transfer to nitrogenase. The chain is Ion-translocating oxidoreductase complex subunit D from Rhodobacter capsulatus (Rhodopseudomonas capsulata).